The primary structure comprises 333 residues: NADH-quinone oxidoreductase subunit H (333 aa).

A run of 8 helical transmembrane segments spans residues 15 to 35 (FFIF…FVTY), 88 to 108 (FILA…VIPF), 117 to 137 (IGVG…GVVT), 159 to 179 (ISYE…AGSL), 191 to 211 (VWYI…AVAE), 239 to 259 (WAFF…LITV), 274 to 296 (IPGA…WFRV), and 313 to 333 (VLLP…ELFF).

Belongs to the complex I subunit 1 family. As to quaternary structure, NDH-1 is composed of 14 different subunits. Subunits NuoA, H, J, K, L, M, N constitute the membrane sector of the complex.

It localises to the cell membrane. It carries out the reaction a quinone + NADH + 5 H(+)(in) = a quinol + NAD(+) + 4 H(+)(out). In terms of biological role, NDH-1 shuttles electrons from NADH, via FMN and iron-sulfur (Fe-S) centers, to quinones in the respiratory chain. The immediate electron acceptor for the enzyme in this species is believed to be ubiquinone. Couples the redox reaction to proton translocation (for every two electrons transferred, four hydrogen ions are translocated across the cytoplasmic membrane), and thus conserves the redox energy in a proton gradient. This subunit may bind ubiquinone. The chain is NADH-quinone oxidoreductase subunit H from Bacillus cereus (strain G9842).